Reading from the N-terminus, the 139-residue chain is MDKYKIFDVDRNNGIGARSAIMGLYHHPSMVHRGTFYEKGCPVTPDHDKYCIYFIIYTPEPLIIRTLTAHFVSGARPREWFLGGWCSTPRHIGIGQHSVLANRGVRILSLFLFFEVLAYYPFGFFSWPNSWSNQKWFLI.

It is found in the mitochondrion. This is an uncharacterized protein from Marchantia polymorpha (Common liverwort).